Here is a 448-residue protein sequence, read N- to C-terminus: tRNA-2-methylthio-N(6)-dimethylallyladenosine synthase (448 aa).

Residues 2–120 form the MTTase N-terminal domain; it reads KKYRIIVFGC…LPELIGKVIE (119 aa). Cysteine 11, cysteine 47, cysteine 81, cysteine 158, cysteine 162, and cysteine 165 together coordinate [4Fe-4S] cluster. In terms of domain architecture, Radical SAM core spans 144 to 374; that stretch reads RKEGVRAWVT…IKLQNKISLE (231 aa). Positions 377 to 440 constitute a TRAM domain; that stretch reads EEEVGQTQEV…LAHLTGILSY (64 aa).

This sequence belongs to the methylthiotransferase family. MiaB subfamily. In terms of assembly, monomer. [4Fe-4S] cluster is required as a cofactor.

It localises to the cytoplasm. The enzyme catalyses N(6)-dimethylallyladenosine(37) in tRNA + (sulfur carrier)-SH + AH2 + 2 S-adenosyl-L-methionine = 2-methylsulfanyl-N(6)-dimethylallyladenosine(37) in tRNA + (sulfur carrier)-H + 5'-deoxyadenosine + L-methionine + A + S-adenosyl-L-homocysteine + 2 H(+). In terms of biological role, catalyzes the methylthiolation of N6-(dimethylallyl)adenosine (i(6)A), leading to the formation of 2-methylthio-N6-(dimethylallyl)adenosine (ms(2)i(6)A) at position 37 in tRNAs that read codons beginning with uridine. In Pelotomaculum thermopropionicum (strain DSM 13744 / JCM 10971 / SI), this protein is tRNA-2-methylthio-N(6)-dimethylallyladenosine synthase.